Here is an 81-residue protein sequence, read N- to C-terminus: Large ribosomal subunit protein uL29c (81 aa).

It belongs to the universal ribosomal protein uL29 family.

The protein localises to the plastid. Its subcellular location is the chloroplast. In Phaeodactylum tricornutum (strain CCAP 1055/1), this protein is Large ribosomal subunit protein uL29c.